The primary structure comprises 289 residues: Formamidopyrimidine-DNA glycosylase (289 aa).

Pro2 functions as the Schiff-base intermediate with DNA in the catalytic mechanism. Glu3 (proton donor) is an active-site residue. Lys60 acts as the Proton donor; for beta-elimination activity in catalysis. Residues His94, Arg126, and Arg167 each contribute to the DNA site. An FPG-type zinc finger spans residues 252 to 287 (QVYGKPAGTPCPRCGTGLARIRIAGRSSVFCPRCQP). Arg277 serves as the catalytic Proton donor; for delta-elimination activity.

Belongs to the FPG family. Monomer. Zn(2+) is required as a cofactor.

The enzyme catalyses Hydrolysis of DNA containing ring-opened 7-methylguanine residues, releasing 2,6-diamino-4-hydroxy-5-(N-methyl)formamidopyrimidine.. It catalyses the reaction 2'-deoxyribonucleotide-(2'-deoxyribose 5'-phosphate)-2'-deoxyribonucleotide-DNA = a 3'-end 2'-deoxyribonucleotide-(2,3-dehydro-2,3-deoxyribose 5'-phosphate)-DNA + a 5'-end 5'-phospho-2'-deoxyribonucleoside-DNA + H(+). Its function is as follows. Involved in base excision repair of DNA damaged by oxidation or by mutagenic agents. Acts as a DNA glycosylase that recognizes and removes damaged bases. Has a preference for oxidized purines, such as 7,8-dihydro-8-oxoguanine (8-oxoG). Has AP (apurinic/apyrimidinic) lyase activity and introduces nicks in the DNA strand. Cleaves the DNA backbone by beta-delta elimination to generate a single-strand break at the site of the removed base with both 3'- and 5'-phosphates. The chain is Formamidopyrimidine-DNA glycosylase from Thermomicrobium roseum (strain ATCC 27502 / DSM 5159 / P-2).